The sequence spans 579 residues: Zinc finger protein 382 (579 aa).

Positions 1–12 are enriched in basic residues; sequence MGRPGRKPRGRA. The interval 1–37 is disordered; that stretch reads MGRPGRKPRGRARPGLFPFPKEELRQGGSSPANLNAM. The segment at 12 to 135 is mediates interaction with TRIM28; that stretch reads ARPGLFPFPK…DKPPKSIVII (124 aa). Residues 27-36 are compositionally biased toward polar residues; the sequence is GGSSPANLNA. Represses transcription stretches follow at residues 40 to 81 and 105 to 240; these read GPVS…FISV and IFPS…PEQR. The KRAB domain maps to 42-113; it reads VSFKDVTVDF…RIFPSQSYLE (72 aa). The C2H2-type 1; degenerate zinc finger occupies 241 to 263; the sequence is FEYNKCDSSFLMTGVEFPHGRAH. 9 C2H2-type zinc fingers span residues 325-347, 353-375, 381-403, 409-431, 437-459, 465-487, 493-515, 521-543, and 549-571; these read FQCP…ERIH, YICC…EKTH, YLCV…HKAH, YECT…QRTH, YQCT…QRTH, YICS…QRIH, YICS…YRIH, NGCP…QKIH, and YECQ…QKTH. The segment at 325–579 is required for transcriptional repression activity; probably mediates sequence-specific DNA-binding; the sequence is FQCPYCGNSF…THKTETMRFQ (255 aa).

It belongs to the krueppel C2H2-type zinc-finger protein family. As to quaternary structure, interacts with TRIM28; enhances the transcriptional repressor activity.

It localises to the nucleus. Its function is as follows. Functions as a sequence-specific transcriptional repressor. The chain is Zinc finger protein 382 (Znf382) from Mus musculus (Mouse).